The primary structure comprises 248 residues: Segregation and condensation protein A (248 aa).

Belongs to the ScpA family. Component of a cohesin-like complex composed of ScpA, ScpB and the Smc homodimer, in which ScpA and ScpB bind to the head domain of Smc. The presence of the three proteins is required for the association of the complex with DNA.

Its subcellular location is the cytoplasm. Its function is as follows. Participates in chromosomal partition during cell division. May act via the formation of a condensin-like complex containing Smc and ScpB that pull DNA away from mid-cell into both cell halves. The polypeptide is Segregation and condensation protein A (Clostridium perfringens (strain SM101 / Type A)).